Here is a 420-residue protein sequence, read N- to C-terminus: 3-oxoacyl-[acyl-carrier-protein] synthase 2 (420 aa).

A Ketosynthase family 3 (KS3) domain is found at phenylalanine 13 to cysteine 419. Residues cysteine 173, histidine 314, and histidine 349 each act as for beta-ketoacyl synthase activity in the active site.

It belongs to the thiolase-like superfamily. Beta-ketoacyl-ACP synthases family.

It localises to the cytoplasm. The enzyme catalyses an ultra-long-chain di-unsaturated fatty acyl-[ACP] + malonyl-[ACP] + H(+) = a 3-oxo-ultra-long-chain di-unsaturated fatty acyl-[ACP] + holo-[ACP] + CO2. It functions in the pathway lipid metabolism; mycolic acid biosynthesis. Its function is as follows. Part of the mycobacterial fatty acid elongation system FAS-II, which is involved in mycolic acid biosynthesis. Catalyzes the elongation of long chain acyl-ACP substrates by the addition of two carbons from malonyl-ACP to an acyl acceptor. Involved in extension of the mycolate chains to full lengths and produces longer chain multiunsaturated hydrocarbons averaging 54 carbons in length. The chain is 3-oxoacyl-[acyl-carrier-protein] synthase 2 (kasB) from Mycobacterium leprae (strain TN).